The following is a 555-amino-acid chain: Natural resistance-associated macrophage protein 1 (555 aa).

Residues 1–63 (MSGSGPAMAS…STPGFSFRKL (63 aa)) lie on the Cytoplasmic side of the membrane. A helical transmembrane segment spans residues 64–81 (WAFTGPGFLMSIAYLDPG). Topologically, residues 82–90 (NVESDLQCG) are extracellular. Residues 91 to 110 (AVAGFKLLWVLLWATVLGLL) form a helical membrane-spanning segment. Residues 111–147 (CQRLAIRLGVVTGKDLAEICYLYYPRVPRVLLWLMME) lie on the Cytoplasmic side of the membrane. A helical transmembrane segment spans residues 148 to 168 (IAIIGSDMQEVIGTAIAFSLL). The Extracellular segment spans residues 169–172 (SAGR). Residues 173 to 192 (IPLWGGVLITITDTLFFLFL) traverse the membrane as a helical segment. At 193 to 201 (DKYGLRKLE) the chain is on the cytoplasmic side. Residues 202 to 222 (AFFGFLITIMALTFGYEYVMV) traverse the membrane as a helical segment. The Extracellular segment spans residues 223–245 (RPAQTEVLKGIFLPYCPGCGREE). A helical membrane pass occupies residues 246 to 264 (LLQAVGIVGAIIMPHNIFL). Residues 265 to 292 (HSSLVKTRAIDRSKKEEVKEANMYFLTE) lie on the Cytoplasmic side of the membrane. The chain crosses the membrane as a helical span at residues 293–312 (SCLALFVSFLINLFVMAVFG). Residues 313 to 354 (EAFYHQRNEDVHNKCVNSSVSRYASIFPINNETVSVDIYQGG) lie on the Extracellular side of the membrane. N-linked (GlcNAc...) asparagine glycosylation is found at N329 and N343. A helical transmembrane segment spans residues 355 to 374 (VILGCYFGAAALYIWAVGIL). The Cytoplasmic segment spans residues 375 to 405 (AAGQSSTMTGTYAGQFVMEGFLQLRWSRFTR). The helical transmembrane segment at 406 to 423 (VLFTRSLAILPTLFVAAF) threads the bilayer. The Extracellular portion of the chain corresponds to 424–434 (RDVSQLTGMND). Residues 435–455 (LLNVLQSILLPFAVLPVLTFT) form a helical membrane-spanning segment. Topologically, residues 456-471 (SLRPLMHDFANGLLGQ) are cytoplasmic. Residues 472 to 493 (VLMSLITGLVCAINVYFVVDFL) form a helical membrane-spanning segment. Residues 494-501 (PTLRGLGY) lie on the Extracellular side of the membrane. The helical transmembrane segment at 502-521 (LIPLGLLLVAYVAFVTYLLW) threads the bilayer. At 522 to 555 (TCSIAHGARFLARGRYNRFSFDVTADVPGLAGPH) the chain is on the cytoplasmic side.

Belongs to the NRAMP family. In terms of tissue distribution, macrophages; spleen and thymus and at lower level in liver and lung.

It is found in the late endosome membrane. Its subcellular location is the lysosome membrane. It catalyses the reaction Zn(2+)(in) + H(+)(out) = Zn(2+)(out) + H(+)(in). The catalysed reaction is Fe(2+)(in) + H(+)(out) = Fe(2+)(out) + H(+)(in). It carries out the reaction Mn(2+)(in) + H(+)(out) = Mn(2+)(out) + H(+)(in). Its function is as follows. Macrophage-specific antiporter that fluxes metal ions in either direction against a proton gradient. Localized to late endosomal lysosomal membranes, delivers bivalent cations from the cytosol into these acidic compartments where they may directly affect antimicrobial activity. Involved in iron metabolism and host natural resistance to infection with intracellular parasites. Pathogen resistance involves sequestration of Fe(2+) and Mn(2+), cofactors of both prokaryotic and eukaryotic catalases and superoxide dismutases, not only to protect the macrophage against its own generation of reactive oxygen species, but to deny the cations to the pathogen for synthesis of its protective enzymes. The sequence is that of Natural resistance-associated macrophage protein 1 (SLC11A1) from Gallus gallus (Chicken).